Reading from the N-terminus, the 273-residue chain is MNKYFTCYVVASLFFSGCTVQHNLINETQSQIVQGHNQVIHQYFDEKNTSGVLVIQTDKKINLYGNALSRANTEYVPASTFKMLNALIGLENQKTDINEIFKWKGEKRSFTTWEKDMTLGEAMKLSAVPVYQELARRIGLDLMQKEVERIDFGNAEIGQQVDNFWLIGPLKVTPIQEVEFVSQLAHTQLPFSEKVQANVKNMLLLEENNGYKIFGKTGWAMDIKPQVGWLTGWVEQPDGKIVAFALNMEMRSEMPASIRNELLMKSLKQLNII.

The first 17 residues, 1 to 17 (MNKYFTCYVVASLFFSG), serve as a signal peptide directing secretion. Residue cysteine 18 is the site of N-palmitoyl cysteine attachment. Cysteine 18 carries the S-diacylglycerol cysteine lipid modification. Catalysis depends on serine 79, which acts as the Acyl-ester intermediate. Lysine 82 carries the post-translational modification N6-carboxylysine. Residue 216–218 (KTG) participates in substrate binding.

The protein belongs to the class-D beta-lactamase family.

It localises to the cell membrane. The enzyme catalyses a beta-lactam + H2O = a substituted beta-amino acid. In terms of biological role, catalyzes the hydrolysis of beta-lactam antibiotics. This chain is Beta-lactamase OXA-133, found in Acinetobacter radioresistens.